Reading from the N-terminus, the 992-residue chain is Presequence protease, mitochondrial (992 aa).

The transit peptide at 1–30 (MNYAKLSIAFSKKTIKTHNCRLFQRWLHVG) directs the protein to the mitochondrion. H91 is a Zn(2+) binding site. E94 acts as the Proton acceptor in catalysis. Position 95 (H95) interacts with Zn(2+). E167 is an active-site residue. E192 serves as a coordination point for Zn(2+).

Belongs to the peptidase M16 family. PreP subfamily. In terms of assembly, monomer and homodimer; homodimerization is induced by binding of the substrate. Zn(2+) serves as cofactor.

The protein resides in the mitochondrion intermembrane space. The protein localises to the mitochondrion matrix. Functionally, degrades mitochondrial transit peptides after their cleavage in the intermembrane space or in the matrix, and presequence peptides; clearance of these peptides is required to keep the presequence processing machinery running. Preferentially cleaves the N-terminal side of paired basic amino acid residues. Also degrades other unstructured peptides. May function as an ATP-dependent peptidase as opposed to a metalloendopeptidase. In Schizosaccharomyces pombe (strain 972 / ATCC 24843) (Fission yeast), this protein is Presequence protease, mitochondrial (cym1).